A 267-amino-acid chain; its full sequence is NAD kinase (267 aa).

Residue aspartate 52 is the Proton acceptor of the active site. NAD(+)-binding positions include 52–53 (DG), arginine 57, 121–122 (NE), arginine 132, lysine 150, aspartate 152, 163–168 (TAYSLS), and alanine 187.

Belongs to the NAD kinase family. The cofactor is a divalent metal cation.

It localises to the cytoplasm. It carries out the reaction NAD(+) + ATP = ADP + NADP(+) + H(+). Functionally, involved in the regulation of the intracellular balance of NAD and NADP, and is a key enzyme in the biosynthesis of NADP. Catalyzes specifically the phosphorylation on 2'-hydroxyl of the adenosine moiety of NAD to yield NADP. This is NAD kinase from Fusobacterium nucleatum subsp. nucleatum (strain ATCC 25586 / DSM 15643 / BCRC 10681 / CIP 101130 / JCM 8532 / KCTC 2640 / LMG 13131 / VPI 4355).